The following is a 131-amino-acid chain: Snaclec alboaggregin-A subunit alpha (131 aa).

The region spanning 1–131 is the C-type lectin domain; it reads DCPSDWSSYD…EYPFVCKFXR (131 aa). Cystine bridges form between Cys2–Cys13, Cys30–Cys127, and Cys102–Cys119.

This sequence belongs to the snaclec family. In terms of assembly, heterotetramer of the subunits alpha, alpha', beta and beta'; disulfide-linked. As to expression, expressed by the venom gland.

It is found in the secreted. In terms of biological role, potent platelet activator that aggregates platelets via both GPIbalpha (GP1BA) and GPVI (GP6). Induces a tyrosine phosphorylation profile in platelets that resembles this produced by collagen, involving the time dependent tyrosine phosphorylation of Fc receptor gamma chain (FCGR1A), phospholipase Cgamma2 (PLCG2), and LAT. This Trimeresurus albolabris (White-lipped pit viper) protein is Snaclec alboaggregin-A subunit alpha.